A 1555-amino-acid chain; its full sequence is Probable serine/threonine-protein kinase DDB_G0276181 (1555 aa).

Disordered regions lie at residues 1-54 (MTSV…NNSF), 138-208 (IIQQ…NSKL), 342-452 (KLKK…DSPF), 486-508 (TTTT…IKPL), and 781-850 (NNIN…NQNT). Composition is skewed to low complexity over residues 14-53 (NNSG…NNNS), 138-205 (IIQQ…NNNN), 359-378 (SNIA…KING), and 395-431 (NNSQ…SKKP). The PH domain maps to 58 to 238 (QVLHTGYLTK…WIEMIKLAIS (181 aa)). The segment covering 437-452 (RNISTSDNGSGTDSPF) has biased composition (polar residues). 2 stretches are compositionally biased toward low complexity: residues 486–504 (TTTT…TNTN) and 781–832 (NNIN…NNNN). Over residues 833 to 850 (GSGLLSSSPLITISNQNT) the composition is skewed to polar residues. The region spanning 986 to 1309 (VVLHERLGTG…TIIHSISKMI (324 aa)) is the Protein kinase domain. 992-1000 (LGTGATGDI) contacts ATP. The tract at residues 1012 to 1031 (RHISNQDSSGSNSSGSGSGH) is disordered. Lysine 1061 contributes to the ATP binding site. The active-site Proton acceptor is aspartate 1156. A compositionally biased stretch (low complexity) spans 1340 to 1376 (VQNNNNNSNNNNNNNNNNNNNNSNSNLNNCNNSSPNL). Disordered regions lie at residues 1340 to 1383 (VQNN…SANN) and 1457 to 1480 (KKSS…GSSR).

Belongs to the protein kinase superfamily. TKL Ser/Thr protein kinase family.

The catalysed reaction is L-seryl-[protein] + ATP = O-phospho-L-seryl-[protein] + ADP + H(+). It catalyses the reaction L-threonyl-[protein] + ATP = O-phospho-L-threonyl-[protein] + ADP + H(+). The sequence is that of Probable serine/threonine-protein kinase DDB_G0276181 from Dictyostelium discoideum (Social amoeba).